A 70-amino-acid polypeptide reads, in one-letter code: Small ribosomal subunit protein bS21 (70 aa).

It belongs to the bacterial ribosomal protein bS21 family.

The protein is Small ribosomal subunit protein bS21 of Delftia acidovorans (strain DSM 14801 / SPH-1).